We begin with the raw amino-acid sequence, 652 residues long: DNA mismatch repair protein MutL (652 aa).

Disordered regions lie at residues 357-377 (LGAN…NYPS) and 425-457 (PDKG…NSTD). Polar residues predominate over residues 365-375 (SHSSNTPTLNY).

Belongs to the DNA mismatch repair MutL/HexB family.

This protein is involved in the repair of mismatches in DNA. It is required for dam-dependent methyl-directed DNA mismatch repair. May act as a 'molecular matchmaker', a protein that promotes the formation of a stable complex between two or more DNA-binding proteins in an ATP-dependent manner without itself being part of a final effector complex. The polypeptide is DNA mismatch repair protein MutL (Colwellia psychrerythraea (strain 34H / ATCC BAA-681) (Vibrio psychroerythus)).